Consider the following 427-residue polypeptide: Tol-Pal system protein TolB (427 aa).

Residues 1 to 23 (MKLLKRLVSVFAIVLAVGSNAFA) form the signal peptide.

This sequence belongs to the TolB family. In terms of assembly, the Tol-Pal system is composed of five core proteins: the inner membrane proteins TolA, TolQ and TolR, the periplasmic protein TolB and the outer membrane protein Pal. They form a network linking the inner and outer membranes and the peptidoglycan layer.

Its subcellular location is the periplasm. Functionally, part of the Tol-Pal system, which plays a role in outer membrane invagination during cell division and is important for maintaining outer membrane integrity. This chain is Tol-Pal system protein TolB, found in Haemophilus influenzae (strain PittGG).